Here is a 620-residue protein sequence, read N- to C-terminus: Acetylcholinesterase 1 (620 aa).

Positions 1 to 31 are cleaved as a signal peptide; sequence MRNSLLFFIFLPSTILAVDLIHLHDGSPLFG. N74 is a glycosylation site (N-linked (GlcNAc...) asparagine). C82 and C109 are disulfide-bonded. S216 (acyl-ester intermediate) is an active-site residue. C270 and C286 are oxidised to a cystine. The N-linked (GlcNAc...) asparagine glycan is linked to N272. Residues E346 and H468 each act as charge relay system in the active site. C430 and C558 are disulfide-bonded. 2 N-linked (GlcNAc...) asparagine glycosylation sites follow: N486 and N536.

This sequence belongs to the type-B carboxylesterase/lipase family. In terms of assembly, oligomer composed of disulfide-linked homodimers.

It localises to the synapse. Its subcellular location is the secreted. The protein resides in the cell membrane. It catalyses the reaction acetylcholine + H2O = choline + acetate + H(+). Functionally, rapidly hydrolyzes acetylcholine and releases choline into the synapse. It can hydrolyze propionylcholine and butyrylthiocholine in vitro. The polypeptide is Acetylcholinesterase 1 (ace-1) (Caenorhabditis elegans).